The primary structure comprises 253 residues: MHGLDDAQYLQQKAHNKRISEFRSSSNSGINVTVVLKYTNGVVQVYNWQGTEVIAGSLNRQLMKFPNYMNPDKHGRIEWPGEGVEHQHGLIRSNGGNGSYDIGAGDPYAMQFIVQGSVDWNATRLRFFGPDGSRWMPDDQGGASVRAGLLNAAEDIINSKMQPLYFCDRMAGKSYYVRFDDKYAPRFPTIGFEVYRYRVGATNEMGGESARTAVASLISFPTFSTAYVNEKVAVENFFQPRELVYQNSYGYTV.

Major component of the virus occlusion bodies, which are large proteinaceous structures (polyhedra), that protect the virus from the outside environment for extended periods until they are ingested by insect larvae. This Orgyia pseudotsugata cypovirus (OpCPV) protein is Polyhedrin.